We begin with the raw amino-acid sequence, 359 residues long: Putative nucleotidyltransferase MAB21L1 (359 aa).

A ribonucleoside 5'-triphosphate contacts are provided by residues 23 to 24 (RK) and 63 to 66 (YEGL). 2 residues coordinate Mg(2+): glutamate 73 and glutamate 75. A ribonucleoside 5'-triphosphate-binding positions include lysine 248 and 252-255 (SLLK).

This sequence belongs to the mab-21 family. Monomer. Homodecamer; composed of 2 back to back homopentamers. The protein may exist as monomer in solution and oiligomerizes upon ligand binding.

It is found in the nucleus. In terms of biological role, putative nucleotidyltransferase required for several aspects of embryonic development including normal development of the eye. It is unclear whether it displays nucleotidyltransferase activity in vivo. Binds single-stranded RNA (ssRNA). In Xenopus tropicalis (Western clawed frog), this protein is Putative nucleotidyltransferase MAB21L1 (mab21l1).